We begin with the raw amino-acid sequence, 340 residues long: Protein HP_1247 (340 aa).

Seems to interact with H.pylori HolB.

Functionally, could be the functional equivalent of DNA polymerase III delta subunit (HolA). The protein is Protein HP_1247 of Helicobacter pylori (strain ATCC 700392 / 26695) (Campylobacter pylori).